The chain runs to 139 residues: Proline-rich protein 13 (139 aa).

Residues 1 to 139 (MWNPSAGPNP…SSSSSSSDSD (139 aa)) are disordered. Pro residues-rich tracts occupy residues 24-62 (ACPP…PQPG) and 70-91 (GPYP…PPAP). Residues 103-124 (KTRKKMKKAHKKSHKHHKHGKH) are compositionally biased toward basic residues. Positions 125–139 (SSSSSSSSSSSSDSD) are enriched in low complexity.

It is found in the nucleus. Functionally, negatively regulates TSP1 expression at the level of transcription. This down-regulation was shown to reduce taxane-induced apoptosis. The polypeptide is Proline-rich protein 13 (Prr13) (Rattus norvegicus (Rat)).